The chain runs to 559 residues: Asparagine--tRNA ligase, cytoplasmic (559 aa).

Phosphoserine is present on S72. N6-acetyllysine is present on residues K255 and K501.

Belongs to the class-II aminoacyl-tRNA synthetase family.

The protein localises to the cytoplasm. The catalysed reaction is tRNA(Asn) + L-asparagine + ATP = L-asparaginyl-tRNA(Asn) + AMP + diphosphate + H(+). The protein is Asparagine--tRNA ligase, cytoplasmic (NARS) of Bos taurus (Bovine).